Consider the following 152-residue polypeptide: Flagellar assembly factor FliW (152 aa).

Belongs to the FliW family. In terms of assembly, interacts with translational regulator CsrA and flagellin(s).

It is found in the cytoplasm. Acts as an anti-CsrA protein, binds CsrA and prevents it from repressing translation of its target genes, one of which is flagellin. Binds to flagellin and participates in the assembly of the flagellum. The sequence is that of Flagellar assembly factor FliW from Desulfitobacterium hafniense (strain Y51).